Here is a 202-residue protein sequence, read N- to C-terminus: Translation initiation factor IF-3 (202 aa).

Belongs to the IF-3 family. As to quaternary structure, monomer.

It is found in the cytoplasm. Functionally, IF-3 binds to the 30S ribosomal subunit and shifts the equilibrium between 70S ribosomes and their 50S and 30S subunits in favor of the free subunits, thus enhancing the availability of 30S subunits on which protein synthesis initiation begins. This chain is Translation initiation factor IF-3, found in Prochlorococcus marinus (strain NATL2A).